The following is a 229-amino-acid chain: MSETGSIADGYAAADIRAAEAPLLAAGAQLMRVAAAGLARVCRAEAPSGPVLVLVGAGNNGGDALLAAADLARDGRDVRVIRTASRIHGAAARAAEAGVPITPAEELDDAEVAALARASALVVDGILGIGTTASPALRGEARRVVAALLPVILGAGGPVVVACDIPSGVGCDDGQVPDPTVLSADVTVTFGAGKPGLMRGPGRALAGRVELVDVGLDLSGATPVARAAR.

The YjeF N-terminal domain occupies tyrosine 11–threonine 222. Position 59–63 (asparagine 59–aspartate 63) interacts with (6S)-NADPHX. K(+) contacts are provided by asparagine 60 and aspartate 124. Residues glycine 128–alanine 136 and aspartate 164 each bind (6S)-NADPHX. Residue serine 167 coordinates K(+).

It belongs to the NnrE/AIBP family. It depends on K(+) as a cofactor.

The enzyme catalyses (6R)-NADHX = (6S)-NADHX. It catalyses the reaction (6R)-NADPHX = (6S)-NADPHX. In terms of biological role, catalyzes the epimerization of the S- and R-forms of NAD(P)HX, a damaged form of NAD(P)H that is a result of enzymatic or heat-dependent hydration. This is a prerequisite for the S-specific NAD(P)H-hydrate dehydratase to allow the repair of both epimers of NAD(P)HX. This Clavibacter sepedonicus (Clavibacter michiganensis subsp. sepedonicus) protein is NAD(P)H-hydrate epimerase.